Reading from the N-terminus, the 361-residue chain is Homocitrate synthase (361 aa).

The 249-residue stretch at M1 to Y249 folds into the Pyruvate carboxyltransferase domain. Position 8 (R8) interacts with 2-oxoglutarate. E9 lines the Mg(2+) pocket. The 2-oxoglutarate site is built by H68, R128, and T162. 2 residues coordinate Mg(2+): H188 and H190. Catalysis depends on H282, which acts as the Proton acceptor.

Belongs to the alpha-IPM synthase/homocitrate synthase family. Homocitrate synthase LYS20/LYS21 subfamily. Requires Mg(2+) as cofactor. Mn(2+) serves as cofactor.

It carries out the reaction acetyl-CoA + 2-oxoglutarate + H2O = (2R)-homocitrate + CoA + H(+). The protein operates within amino-acid biosynthesis; L-lysine biosynthesis via AAA pathway; L-alpha-aminoadipate from 2-oxoglutarate: step 1/5. Its function is as follows. Catalyzes the aldol-type condensation of 2-oxoglutarate with acetyl-CoA to yield homocitrate. Carries out the first step of the alpha-aminoadipate (AAA) lysine biosynthesis pathway. This chain is Homocitrate synthase, found in Pyrococcus horikoshii (strain ATCC 700860 / DSM 12428 / JCM 9974 / NBRC 100139 / OT-3).